Reading from the N-terminus, the 291-residue chain is MTFQDLILSLQGYWAKQGCVIQQPYDTEKGAGTFNPATFLRVLGPEPWNVAYVEPSRRPTDGRYGENPNRLQHYYQFQVIMKPSPLNILDLYLDSLRAFGIDPQKHDIRFVEDDWESPTLGAWGLGWEVWLDGMEITQFTYFQQAGGIDLKPVSSEITYGCERIAMYLQGVDNVYDLEWIKGVSYGDIHHRSEVEFSTYNFEEADVAMLLQLFTMYEKECVRLVERGLVLPAYDFVMKCSHTFNLLDARGAISVTERASYIGRVRNVARLCAEGYLKLRESLGFPLLKGGR.

It belongs to the class-II aminoacyl-tRNA synthetase family. As to quaternary structure, tetramer of two alpha and two beta subunits.

Its subcellular location is the cytoplasm. The enzyme catalyses tRNA(Gly) + glycine + ATP = glycyl-tRNA(Gly) + AMP + diphosphate. This chain is Glycine--tRNA ligase alpha subunit, found in Geobacter metallireducens (strain ATCC 53774 / DSM 7210 / GS-15).